The chain runs to 290 residues: Putative heme oxygenase 3 (290 aa).

The segment covering 1 to 12 (MSSEVETAEAVD) has biased composition (acidic residues). The tract at residues 1–33 (MSSEVETAEAVDESEKNSMASEKENHSKIADFS) is disordered. Residues 13 to 33 (ESEKNSMASEKENHSKIADFS) show a composition bias toward basic and acidic residues. 2 HRM repeats span residues 238-243 (KCPFNA) and 255-260 (NCPFQM).

It belongs to the heme oxygenase family. In terms of tissue distribution, found in the spleen, liver, thymus, prostate, heart, kidney, brain and testis.

The enzyme catalyses heme b + 3 reduced [NADPH--hemoprotein reductase] + 3 O2 = biliverdin IXalpha + CO + Fe(2+) + 3 oxidized [NADPH--hemoprotein reductase] + 3 H2O + H(+). Functionally, heme oxygenase cleaves the heme ring at the alpha methene bridge to form biliverdin. Biliverdin is subsequently converted to bilirubin by biliverdin reductase. Heme oxygenase 3 could be implicated in some heme-dependent regulatory role in the cell. The chain is Putative heme oxygenase 3 (Hmox3) from Rattus norvegicus (Rat).